Consider the following 230-residue polypeptide: Heptaprenylglyceryl phosphate synthase (230 aa).

Residue Lys-12 participates in sn-glycerol 1-phosphate binding. The Mg(2+) site is built by Asp-14 and Thr-40. Residues 159–164 (YIEYSG), Gly-189, and 209–210 (GD) contribute to the sn-glycerol 1-phosphate site.

Belongs to the GGGP/HepGP synthase family. Group I subfamily. Homodimer. It depends on Mg(2+) as a cofactor.

The catalysed reaction is sn-glycerol 1-phosphate + all-trans-heptaprenyl diphosphate = 3-heptaprenyl-sn-glycero-1-phosphate + diphosphate. The protein operates within membrane lipid metabolism; glycerophospholipid metabolism. Prenyltransferase that catalyzes in vivo the transfer of the heptaprenyl moiety of heptaprenyl pyrophosphate (HepPP; 35 carbon atoms) to the C3 hydroxyl of sn-glycerol-1-phosphate (G1P), producing heptaprenylglyceryl phosphate (HepGP). This reaction is an ether-bond-formation step in the biosynthesis of archaea-type G1P-based membrane lipids found in Bacillales. This Staphylococcus aureus (strain MRSA252) protein is Heptaprenylglyceryl phosphate synthase.